The sequence spans 391 residues: Succinyl-diaminopimelate desuccinylase (391 aa).

His-67 contacts Zn(2+). Asp-69 is a catalytic residue. Asp-101 is a binding site for Zn(2+). The active-site Proton acceptor is Glu-135. Residues Glu-136, Glu-164, and His-353 each contribute to the Zn(2+) site.

The protein belongs to the peptidase M20A family. DapE subfamily. In terms of assembly, homodimer. Requires Zn(2+) as cofactor. The cofactor is Co(2+).

It carries out the reaction N-succinyl-(2S,6S)-2,6-diaminopimelate + H2O = (2S,6S)-2,6-diaminopimelate + succinate. It functions in the pathway amino-acid biosynthesis; L-lysine biosynthesis via DAP pathway; LL-2,6-diaminopimelate from (S)-tetrahydrodipicolinate (succinylase route): step 3/3. In terms of biological role, catalyzes the hydrolysis of N-succinyl-L,L-diaminopimelic acid (SDAP), forming succinate and LL-2,6-diaminopimelate (DAP), an intermediate involved in the bacterial biosynthesis of lysine and meso-diaminopimelic acid, an essential component of bacterial cell walls. This chain is Succinyl-diaminopimelate desuccinylase, found in Rickettsia bellii (strain RML369-C).